We begin with the raw amino-acid sequence, 340 residues long: NADPH dehydrogenase (340 aa).

23–26 contacts FMN; the sequence is SPMC. Tyr28 is a binding site for substrate. 2 residues coordinate FMN: Ala60 and Gln102. 164–167 lines the substrate pocket; the sequence is HAAH. Residues Arg215 and 307–308 contribute to the FMN site; that span reads GR.

It belongs to the NADH:flavin oxidoreductase/NADH oxidase family. NamA subfamily. Homotetramer. FMN serves as cofactor.

It carries out the reaction A + NADPH + H(+) = AH2 + NADP(+). Its function is as follows. Catalyzes the reduction of the double bond of an array of alpha,beta-unsaturated aldehydes and ketones. It also reduces the nitro group of nitroester and nitroaromatic compounds. It could have a role in detoxification processes. The protein is NADPH dehydrogenase of Geobacillus thermodenitrificans (strain NG80-2).